A 471-amino-acid chain; its full sequence is 4-aminobutyrate aminotransferase (471 aa).

Position 135 to 136 (135 to 136) interacts with pyridoxal 5'-phosphate; it reads GA. R192 is a binding site for substrate. The residue at position 326 (K326) is an N6-(pyridoxal phosphate)lysine. Residue T351 coordinates pyridoxal 5'-phosphate.

It belongs to the class-III pyridoxal-phosphate-dependent aminotransferase family. As to quaternary structure, homodimer and homotetramer. Pyridoxal 5'-phosphate is required as a cofactor.

It localises to the cytoplasm. It carries out the reaction 4-aminobutanoate + 2-oxoglutarate = succinate semialdehyde + L-glutamate. Its function is as follows. Required for the degradation of gamma-aminobutyric acid (GABA), which is important for utilization of GABA as nitrogen source and for oxidative stress tolerance. Deaminates GABA to succinate semialdehyde, which in turn is converted to succinate by the succinate-semialdehyde dehydrogenase UGA2. Cannot transaminate beta-alanine (BAL). The chain is 4-aminobutyrate aminotransferase (UGA1) from Saccharomyces cerevisiae (strain ATCC 204508 / S288c) (Baker's yeast).